The following is a 333-amino-acid chain: Glyceraldehyde-3-phosphate dehydrogenase 1 (333 aa).

NAD(+) contacts are provided by residues Arg-12–Ile-13, Asp-35, and Arg-79. Residues Ser-152–Thr-154, Thr-183, Arg-198, Ser-211–Gly-212, and Arg-234 each bind D-glyceraldehyde 3-phosphate. Cys-153 acts as the Nucleophile in catalysis. Residue Asn-314 participates in NAD(+) binding.

Belongs to the glyceraldehyde-3-phosphate dehydrogenase family. As to quaternary structure, homotetramer.

The protein resides in the cytoplasm. The catalysed reaction is D-glyceraldehyde 3-phosphate + phosphate + NAD(+) = (2R)-3-phospho-glyceroyl phosphate + NADH + H(+). The protein operates within carbohydrate degradation; glycolysis; pyruvate from D-glyceraldehyde 3-phosphate: step 1/5. Resistant to pentalenolactone (PL). Catalyzes the oxidative phosphorylation of glyceraldehyde 3-phosphate (G3P) to 1,3-bisphosphoglycerate (BPG) using the cofactor NAD. The first reaction step involves the formation of a hemiacetal intermediate between G3P and a cysteine residue, and this hemiacetal intermediate is then oxidized to a thioester, with concomitant reduction of NAD to NADH. The reduced NADH is then exchanged with the second NAD, and the thioester is attacked by a nucleophilic inorganic phosphate to produce BPG. This is Glyceraldehyde-3-phosphate dehydrogenase 1 (gap1) from Streptomyces arenae.